We begin with the raw amino-acid sequence, 432 residues long: Probable rhamnogalacturonase E (432 aa).

Residues 1 to 21 (MQSKTFSVLSSCLLLIATVQG) form the signal peptide. A disulfide bridge connects residues cysteine 42 and cysteine 68. Asparagine 53, asparagine 91, and asparagine 106 each carry an N-linked (GlcNAc...) asparagine glycan. Aspartate 221 functions as the Proton donor in the catalytic mechanism. A disulfide bridge links cysteine 223 with cysteine 240. N-linked (GlcNAc...) asparagine glycosylation is found at asparagine 241 and asparagine 256. Histidine 296 is an active-site residue. 2 disulfide bridges follow: cysteine 329–cysteine 335 and cysteine 357–cysteine 366.

Belongs to the glycosyl hydrolase 28 family.

Its subcellular location is the secreted. Its function is as follows. Pectinolytic enzymes consist of four classes of enzymes: pectine lyase, polygalacturonase, pectin methylesterase and rhamnogalacturonase. Hydrolyzes alpha-D-galacturonopyranosyl-(1,2)-alpha-L-rhamnopyranosyl linkages in the backbone of the hairy regions of pectins. The polypeptide is Probable rhamnogalacturonase E (rhgE) (Aspergillus oryzae (strain ATCC 42149 / RIB 40) (Yellow koji mold)).